The primary structure comprises 260 residues: Tryptophan synthase alpha chain (260 aa).

Active-site proton acceptor residues include E52 and D63.

The protein belongs to the TrpA family. As to quaternary structure, tetramer of two alpha and two beta chains.

The enzyme catalyses (1S,2R)-1-C-(indol-3-yl)glycerol 3-phosphate + L-serine = D-glyceraldehyde 3-phosphate + L-tryptophan + H2O. It functions in the pathway amino-acid biosynthesis; L-tryptophan biosynthesis; L-tryptophan from chorismate: step 5/5. Its function is as follows. The alpha subunit is responsible for the aldol cleavage of indoleglycerol phosphate to indole and glyceraldehyde 3-phosphate. This is Tryptophan synthase alpha chain from Streptococcus thermophilus (strain ATCC BAA-491 / LMD-9).